Consider the following 610-residue polypeptide: UvrABC system protein C (610 aa).

A GIY-YIG domain is found at 16 to 94; that stretch reads SQPGVYRMYD…IKLYQPRYNV (79 aa). One can recognise a UVR domain in the interval 204-239; sequence DQVLTQLISRMETASQNLEFEEAARIRDQIQAVRRV.

This sequence belongs to the UvrC family. In terms of assembly, interacts with UvrB in an incision complex.

Its subcellular location is the cytoplasm. In terms of biological role, the UvrABC repair system catalyzes the recognition and processing of DNA lesions. UvrC both incises the 5' and 3' sides of the lesion. The N-terminal half is responsible for the 3' incision and the C-terminal half is responsible for the 5' incision. This is UvrABC system protein C from Escherichia coli O1:K1 / APEC.